A 491-amino-acid chain; its full sequence is Protein nucleotidyltransferase YdiU (491 aa).

8 residues coordinate ATP: G94, G96, R97, K117, D129, G130, R180, and R187. The Proton acceptor role is filled by D256. The Mg(2+) site is built by N257 and D266. D266 provides a ligand contact to ATP.

The protein belongs to the SELO family. The cofactor is Mg(2+). Mn(2+) is required as a cofactor.

It carries out the reaction L-seryl-[protein] + ATP = 3-O-(5'-adenylyl)-L-seryl-[protein] + diphosphate. It catalyses the reaction L-threonyl-[protein] + ATP = 3-O-(5'-adenylyl)-L-threonyl-[protein] + diphosphate. The enzyme catalyses L-tyrosyl-[protein] + ATP = O-(5'-adenylyl)-L-tyrosyl-[protein] + diphosphate. The catalysed reaction is L-histidyl-[protein] + UTP = N(tele)-(5'-uridylyl)-L-histidyl-[protein] + diphosphate. It carries out the reaction L-seryl-[protein] + UTP = O-(5'-uridylyl)-L-seryl-[protein] + diphosphate. It catalyses the reaction L-tyrosyl-[protein] + UTP = O-(5'-uridylyl)-L-tyrosyl-[protein] + diphosphate. In terms of biological role, nucleotidyltransferase involved in the post-translational modification of proteins. It can catalyze the addition of adenosine monophosphate (AMP) or uridine monophosphate (UMP) to a protein, resulting in modifications known as AMPylation and UMPylation. The protein is Protein nucleotidyltransferase YdiU of Clostridium botulinum (strain 657 / Type Ba4).